We begin with the raw amino-acid sequence, 1597 residues long: Collagen alpha-1(XVII) chain (1597 aa).

Disordered stretches follow at residues 1 to 155 (MDVT…PSTR) and 168 to 188 (GSRS…PIPK). Residues 1 to 468 (MDVTKKNKRD…CGSCCSWWKW (468 aa)) lie on the Cytoplasmic side of the membrane. The segment at 1 to 567 (MDVTKKNKRD…AEQENGNLRG (567 aa)) is nonhelical region (NC16A). Basic and acidic residues predominate over residues 9–19 (RDGSEVTERII). Polar residues-rich tracts occupy residues 58–96 (THGS…SPGS), 111–120 (EGSSSGNSSP), and 170–184 (RSAS…SNTL). Residues 146-231 (RLQSASPSTR…WSSTLPAGSS (86 aa)) are necessary for interaction with DST and for the recruitment of DST to hemidesmosome. A helical; Signal-anchor for type II membrane protein transmembrane segment spans residues 469–489 (LLGLLLTWLLLLGLLFGLIAL). At 490–1597 (AEEVRALKAR…KGGSWRLTSY (1108 aa)) the chain is on the extracellular side. Disordered regions lie at residues 562–857 (NGNL…SSSS), 907–927 (LRGP…FRVR), 970–1041 (LETY…ISSS), 1289–1316 (TAGV…VSGA), and 1344–1394 (FIVG…SSMG). A triple-helical region region spans residues 568 to 1572 (SPGPKGDMGS…ELPLEEQPLA (1005 aa)). Low complexity predominate over residues 604–632 (PKGQKGSVGEPGMEGPMGQRGREGPMGPR). Gly residues predominate over residues 665 to 674 (GPKGSGGSPG). Low complexity-rich tracts occupy residues 730–748 (PGAV…AGPD) and 774–796 (DPGK…PGRP). The span at 820 to 838 (PGPPGPPGAMGPPGPPGAP) shows a compositional bias: pro residues. A compositionally biased stretch (low complexity) spans 847–857 (AGESFMGSSSS). Composition is skewed to pro residues over residues 910–922 (PPGP…PPDL), 977–986 (PPGPPGPPGP), 1023–1035 (PGPP…PGPP), 1296–1310 (PGPP…PRGP), and 1348–1357 (PPGPPGPQGP). Residues 1377–1393 (SSHSASVSRGSSYSSSM) show a composition bias toward low complexity. The N-linked (GlcNAc...) asparagine glycan is linked to Asn1493. A disordered region spans residues 1531 to 1566 (GHPALEGTREKKETKVTKSMRGGEREASPSSHELPL). A compositionally biased stretch (basic and acidic residues) spans 1537–1557 (GTREKKETKVTKSMRGGEREA). Residues 1573–1597 (SVLAMAYGVHVKISPKGGSWRLTSY) form a nonhelical region (NC1) region.

Homotrimers of alpha 1(XVII)chains. Interacts (via cytoplasmic region) with ITGB4 (via cytoplasmic region). Interacts (via cytoplasmic region) with DST (via N-terminus). Interacts (via N-terminus) with PLEC. Interacts (via cytoplasmic region) with DSP. The intracellular/endo domain is disulfide-linked. Post-translationally, prolines at the third position of the tripeptide repeating unit (G-X-Y) are hydroxylated in some or all of the chains. In terms of processing, the ectodomain is shedded from the surface of keratinocytes resulting in a 120-kDa soluble form, also named as 120 kDa linear IgA disease antigen homolog. The shedding is mediated by membrane-bound metalloproteases. As to expression, upper lamina lucidalhemidesmosome.

The protein resides in the cell junction. The protein localises to the hemidesmosome. It localises to the membrane. It is found in the secreted. Its subcellular location is the extracellular space. The protein resides in the extracellular matrix. The protein localises to the basement membrane. The 120 kDa linear IgA disease antigen homolog is an anchoring filament component involved in dermal-epidermal cohesion. The sequence is that of Collagen alpha-1(XVII) chain (COL17A1) from Canis lupus familiaris (Dog).